Consider the following 494-residue polypeptide: Ubiquitin carboxyl-terminal hydrolase 27 (494 aa).

The helical transmembrane segment at 30–50 threads the bilayer; it reads LSFAGLLGVAGFVFAQQHGLF. A USP domain is found at 74-494; the sequence is PGLQNLGNNC…EASLLFYERL (421 aa). The Nucleophile role is filled by cysteine 83. Histidine 440 (proton acceptor) is an active-site residue.

Belongs to the peptidase C19 family.

It is found in the membrane. It catalyses the reaction Thiol-dependent hydrolysis of ester, thioester, amide, peptide and isopeptide bonds formed by the C-terminal Gly of ubiquitin (a 76-residue protein attached to proteins as an intracellular targeting signal).. Its function is as follows. Recognizes and hydrolyzes the peptide bond at the C-terminal Gly of ubiquitin. Involved in the processing of poly-ubiquitin precursors as well as that of ubiquitinated proteins. This is Ubiquitin carboxyl-terminal hydrolase 27 (UBP27) from Arabidopsis thaliana (Mouse-ear cress).